A 664-amino-acid polypeptide reads, in one-letter code: Macoilin (664 aa).

4 helical membrane passes run 28-48, 75-95, 120-140, and 154-174; these read TFLY…DFVL, AFSV…LLFI, VCLP…AIRF, and FAAH…KSYV. A compositionally biased stretch (basic and acidic residues) spans 252-265; it reads YREKGKEKDKDAKK. Residues 252 to 274 form a disordered region; the sequence is YREKGKEKDKDAKKHNLGINNNN. Phosphoserine is present on Ser305. Over residues 320–348 the composition is skewed to polar residues; sequence KNYKNASGVVNSSPRSHSATNGSIPSSSS. The segment at 320 to 375 is disordered; it reads KNYKNASGVVNSSPRSHSATNGSIPSSSSKNEKKQRCTSKGPSAHKDLMENCIPNN. A glycan (N-linked (GlcNAc...) asparagine) is linked at Asn324. Ser332 is subject to Phosphoserine. Asn340 and Asn452 each carry an N-linked (GlcNAc...) asparagine glycan. The interval 630–664 is disordered; sequence TSPLSPVSPHYSSKFVETSPSGLDPNASVYQPLKK. A phosphoserine mark is found at Ser631 and Ser634. N-linked (GlcNAc...) asparagine glycosylation occurs at Asn655.

Belongs to the macoilin family.

The protein resides in the rough endoplasmic reticulum membrane. Its subcellular location is the nucleus membrane. Functionally, plays a role in the regulation of neuronal activity. The polypeptide is Macoilin (Rattus norvegicus (Rat)).